A 628-amino-acid polypeptide reads, in one-letter code: Cytoplasmic dynein 1 intermediate chain 1 (628 aa).

Composition is skewed to basic and acidic residues over residues 1 to 13 (MSDK…ELER) and 20 to 60 (QIRE…RETE). The tract at residues 1-114 (MSDKSDLKAE…RTLQWDTDPS (114 aa)) is disordered. Ser-2 is subject to N-acetylserine. Ser-50 carries the post-translational modification Phosphoserine. Over residues 70 to 79 (PEPPLVPTPM) the composition is skewed to pro residues. The segment covering 80-90 (SPSSKSVSTPS) has biased composition (low complexity). Ser-83 carries the phosphoserine modification. Residue Thr-88 is modified to Phosphothreonine. Ser-90, Ser-94, and Ser-97 each carry phosphoserine. The segment covering 105 to 114 (RTLQWDTDPS) has biased composition (polar residues). The interval 130-146 (KLGVSKVTQVDFLPREV) is interaction with DYNLT1. Residues 152–204 (ETQTPLATHQSEEDEEDEEMVEPKIGHDSELENQEKKQETKEAPPRELTEEEK) form a disordered region. Thr-159 is subject to Phosphothreonine. Ser-162 and Ser-180 each carry phosphoserine. Residues 172-204 (VEPKIGHDSELENQEKKQETKEAPPRELTEEEK) are compositionally biased toward basic and acidic residues. WD repeat units follow at residues 268 to 317 (SKHR…TTPE), 321 to 361 (HCQS…RTPV), 370 to 411 (AHTH…TPQE), 420 to 460 (SKPV…AGIG), 465 to 510 (GHQG…PLYS), 513 to 553 (DNAD…EVPT), and 559 to 598 (EGAS…VPHN). The residue at position 618 (Ser-618) is a Phosphoserine.

This sequence belongs to the dynein intermediate chain family. As to quaternary structure, homodimer. The cytoplasmic dynein 1 complex consists of two catalytic heavy chains (HCs) and a number of non-catalytic subunits presented by intermediate chains (ICs), light intermediate chains (LICs) and light chains (LCs); the composition seems to vary in respect to the IC, LIC and LC composition. The heavy chain homodimer serves as a scaffold for the probable homodimeric assembly of the respective non-catalytic subunits. The ICs and LICs bind directly to the HC dimer and the LCs assemble on the IC dimer. Interacts with DYNC1H1. Interacts with DYNLT1 and DYNLT3. Interacts with DCTN1. Interacts with DYNLL2. Interacts with MCRS1; the interaction is required for the proper distribution of centriolar satellites.

It localises to the cytoplasm. The protein localises to the chromosome. The protein resides in the centromere. It is found in the kinetochore. Its subcellular location is the cytoskeleton. It localises to the spindle pole. Acts as one of several non-catalytic accessory components of the cytoplasmic dynein 1 complex that are thought to be involved in linking dynein to cargos and to adapter proteins that regulate dynein function. Cytoplasmic dynein 1 acts as a motor for the intracellular retrograde motility of vesicles and organelles along microtubules. The intermediate chains mediate the binding of dynein to dynactin via its 150 kDa component (p150-glued) DCTN1. May play a role in mediating the interaction of cytoplasmic dynein with membranous organelles and kinetochores. In Mus musculus (Mouse), this protein is Cytoplasmic dynein 1 intermediate chain 1 (Dync1i1).